We begin with the raw amino-acid sequence, 1179 residues long: uncharacterized protein (1179 aa).

This is an uncharacterized protein from Ictaluridae (bullhead catfishes).